Reading from the N-terminus, the 333-residue chain is Ketol-acid reductoisomerase (NADP(+)) (333 aa).

A KARI N-terminal Rossmann domain is found at 2-182 (ANIYYDDSCD…GGGRAGILET (181 aa)). NADP(+) contacts are provided by residues 25–28 (YGSQ), R48, S51, S53, and 83–86 (DTIQ). Residue H108 is part of the active site. G134 is an NADP(+) binding site. The KARI C-terminal knotted domain maps to 183-331 (SFREETETDL…TKLRSMMKWL (149 aa)). 4 residues coordinate Mg(2+): D191, E195, E227, and E231. Residue S252 participates in substrate binding.

This sequence belongs to the ketol-acid reductoisomerase family. The cofactor is Mg(2+).

It carries out the reaction (2R)-2,3-dihydroxy-3-methylbutanoate + NADP(+) = (2S)-2-acetolactate + NADPH + H(+). It catalyses the reaction (2R,3R)-2,3-dihydroxy-3-methylpentanoate + NADP(+) = (S)-2-ethyl-2-hydroxy-3-oxobutanoate + NADPH + H(+). Its pathway is amino-acid biosynthesis; L-isoleucine biosynthesis; L-isoleucine from 2-oxobutanoate: step 2/4. It functions in the pathway amino-acid biosynthesis; L-valine biosynthesis; L-valine from pyruvate: step 2/4. In terms of biological role, involved in the biosynthesis of branched-chain amino acids (BCAA). Catalyzes an alkyl-migration followed by a ketol-acid reduction of (S)-2-acetolactate (S2AL) to yield (R)-2,3-dihydroxy-isovalerate. In the isomerase reaction, S2AL is rearranged via a Mg-dependent methyl migration to produce 3-hydroxy-3-methyl-2-ketobutyrate (HMKB). In the reductase reaction, this 2-ketoacid undergoes a metal-dependent reduction by NADPH to yield (R)-2,3-dihydroxy-isovalerate. In Leptospira biflexa serovar Patoc (strain Patoc 1 / Ames), this protein is Ketol-acid reductoisomerase (NADP(+)).